The primary structure comprises 466 residues: Coagulation factor IX (466 aa).

Residues 1–25 form the signal peptide; it reads MRCLNMIMAEPPGLITICLLGYLLG. Positions 26 to 46 are excised as a propeptide; it reads ADCTVFLDHEDATKVLSRPKR. Positions 47, 48, 53, 54, 61, 63, 66, 67, 72, 73, and 76 each coordinate Ca(2+). In terms of domain architecture, Gla spans 47-92; that stretch reads YNSGKLEEFVQGNLERECMEEKCSFEEAREVFENTEKTTEFWKQYV. 4-carboxyglutamate occurs at positions 53, 54, 61, 63, 66, 67, 72, 73, 76, 79, and 82. Mg(2+) is bound at residue E61. A disulfide bridge links C64 with C69. E66 provides a ligand contact to Mg(2+). Position 72 (E72) interacts with Mg(2+). Position 76 (E76) interacts with Mg(2+). E82 contributes to the Ca(2+) binding site. Mg(2+) is bound at residue E82. T85 carries an O-linked (GalNAc...) threonine glycan. Positions 86, 93, 94, and 96 each coordinate Ca(2+). E86 bears the 4-carboxyglutamate mark. E86 contributes to the Mg(2+) binding site. The EGF-like 1; calcium-binding domain occupies 93–129; it reads DGDQCESNPCLNGGICKDDINSYECWCQTGFEGKNCE. Disulfide bonds link C97–C108, C102–C117, C119–C128, C134–C145, C141–C155, C157–C170, C178–C340, C257–C273, C387–C401, and C412–C440. O-linked (Glc...) serine glycosylation is present at S99. D110 and D111 together coordinate Ca(2+). Position 110 is a (3R)-3-hydroxyaspartate (D110). Position 114 is a phosphoserine (S114). Positions 130-171 constitute an EGF-like 2 domain; the sequence is LDVTCNIKNGRCKQFCKLDADNKVVCSCTTGYQLAEDQKSCE. Positions 193–231 are cleaved as a propeptide — activation peptide; that stretch reads AETLFLNMDYENSTTDYENSAEAEKNVDNVTQPLNDLTR. Y202 bears the Sulfotyrosine mark. S205 carries the post-translational modification Phosphoserine. Position 206 is a phosphothreonine; alternate (T206). O-linked (GalNAc...) threonine; alternate glycosylation occurs at T206. N221 is a glycosylation site (N-linked (GlcNAc...) asparagine). O-linked (GalNAc...) threonine glycans are attached at residues T223 and T230. The Peptidase S1 domain occupies 232–464; it reads IVGGKTAKPG…YVNWIKEKTK (233 aa). The active-site Charge relay system is H272. Residues E286, N288, E291, E293, and E296 each contribute to the Ca(2+) site. D320 (charge relay system) is an active-site residue. S416 (charge relay system) is an active-site residue.

The protein belongs to the peptidase S1 family. Heterodimer of a light chain and a heavy chain; disulfide-linked. Interacts (inactive and activated) with F11 (activated) in calcium-dependent manner. Interacts with SERPINC1. The iron and 2-oxoglutarate dependent 3-hydroxylation of aspartate and asparagine is (R) stereospecific within EGF domains. In terms of processing, activated by factor XIa, which excises the activation peptide. The propeptide can also be removed by snake venom protease. Activated by coagulation factor VIIa-tissue factor (F7-F3) complex in calcium-dependent manner. Post-translationally, predominantly O-glucosylated at Ser-99 by POGLUT1 in vitro.

It localises to the secreted. The catalysed reaction is Selective cleavage of Arg-|-Ile bond in factor X to form factor Xa.. In terms of biological role, factor IX is a vitamin K-dependent plasma protein that participates in the intrinsic pathway of blood coagulation by converting factor X to its active form in the presence of Ca(2+) ions, phospholipids, and factor VIIIa. This Felis catus (Cat) protein is Coagulation factor IX (F9).